The primary structure comprises 357 residues: 3-isopropylmalate dehydrogenase (357 aa).

Substrate contacts are provided by Arg-97, Arg-107, Arg-135, and Asp-224. Asp-224, Asp-248, and Asp-252 together coordinate Mg(2+). 282–294 lines the NAD(+) pocket; sequence GSAPDIAGQDKAN.

It belongs to the isocitrate and isopropylmalate dehydrogenases family. LeuB type 1 subfamily. Homodimer. It depends on Mg(2+) as a cofactor. Requires Mn(2+) as cofactor.

It localises to the cytoplasm. The catalysed reaction is (2R,3S)-3-isopropylmalate + NAD(+) = 4-methyl-2-oxopentanoate + CO2 + NADH. Its pathway is amino-acid biosynthesis; L-leucine biosynthesis; L-leucine from 3-methyl-2-oxobutanoate: step 3/4. Its function is as follows. Catalyzes the oxidation of 3-carboxy-2-hydroxy-4-methylpentanoate (3-isopropylmalate) to 3-carboxy-4-methyl-2-oxopentanoate. The product decarboxylates to 4-methyl-2 oxopentanoate. This is 3-isopropylmalate dehydrogenase from Synechococcus sp. (strain CC9902).